The sequence spans 767 residues: Granule-bound starch synthase 2, chloroplastic/amyloplastic (767 aa).

A chloroplast-targeting transit peptide spans 1 to 45 (MENSILLHSGNQFHPNLPLLALRPKKLSLIHGSSREQMWRIKRVK). Disordered regions lie at residues 160–204 (KRDL…SSQE) and 226–268 (YMPS…EKPP). The segment covering 172-188 (SRSSITASSQISSTVSS) has biased composition (low complexity). Residues 230–245 (LRKESSASHVEQRNEN) show a composition bias toward basic and acidic residues. A compositionally biased stretch (acidic residues) spans 253–262 (ANEETEDPVN). ADP-alpha-D-glucose is bound at residue K290.

It belongs to the glycosyltransferase 1 family. Bacterial/plant glycogen synthase subfamily.

It is found in the plastid. The protein localises to the chloroplast. Its subcellular location is the amyloplast. It carries out the reaction [(1-&gt;4)-alpha-D-glucosyl](n) + ADP-alpha-D-glucose = [(1-&gt;4)-alpha-D-glucosyl](n+1) + ADP + H(+). Its pathway is glycan biosynthesis; starch biosynthesis. Functionally, accounts for only 10 to 15% of the total soluble starch synthase activity in tubers. The protein is Granule-bound starch synthase 2, chloroplastic/amyloplastic (SS2) of Solanum tuberosum (Potato).